We begin with the raw amino-acid sequence, 235 residues long: Secreted RxLR effector protein 27 (235 aa).

The N-terminal stretch at 1–25 is a signal peptide; the sequence is MTNLFTRHTRRSLTALALLSGGVYA. The RxLR-dEER motif lies at 36–60; sequence RSLRVFVTGGQVLWDYRIHFKGIER.

This sequence belongs to the RxLR effector family.

It is found in the secreted. Its subcellular location is the host cytoplasm. The protein localises to the host nucleus. In terms of biological role, effector that acts as a broad suppressor of cell death to interrupt plant immunity. Inhibits cell death induced by cell death-inducing proteins, including the PAMP elicitor INF1 from P.infestans. This Plasmopara viticola (Downy mildew of grapevine) protein is Secreted RxLR effector protein 27.